We begin with the raw amino-acid sequence, 159 residues long: Ribosomal RNA large subunit methyltransferase H (159 aa).

S-adenosyl-L-methionine contacts are provided by residues Leu76, Gly108, and 127–132 (FGKLTL).

Belongs to the RNA methyltransferase RlmH family. Homodimer.

It localises to the cytoplasm. It catalyses the reaction pseudouridine(1915) in 23S rRNA + S-adenosyl-L-methionine = N(3)-methylpseudouridine(1915) in 23S rRNA + S-adenosyl-L-homocysteine + H(+). Functionally, specifically methylates the pseudouridine at position 1915 (m3Psi1915) in 23S rRNA. This is Ribosomal RNA large subunit methyltransferase H from Streptococcus sanguinis (strain SK36).